The chain runs to 349 residues: Peptide transport system ATP-binding protein SapD (349 aa).

The ABC transporter domain maps to 1–259 (MALLDICNLN…PHHPYTQALI (259 aa)). 40 to 47 (GESGSGKS) contacts ATP.

Belongs to the ABC transporter superfamily.

It is found in the cell inner membrane. Functionally, involved in a peptide intake transport system that plays a role in the resistance to antimicrobial peptides. The polypeptide is Peptide transport system ATP-binding protein SapD (sapD) (Haemophilus influenzae (strain ATCC 51907 / DSM 11121 / KW20 / Rd)).